The chain runs to 261 residues: Carbonic anhydrase 1 (261 aa).

A2 bears the N-acetylalanine mark. Residues 4–261 (PDWGYDGENG…LKGRTVKASF (258 aa)) enclose the Alpha-carbonic anhydrase domain. The tract at residues 22-41 (PIANGNNQSPIDIKTSETKR) is disordered. Residue H65 is the Proton donor/acceptor of the active site. H95, H97, and H120 together coordinate Zn(2+). Substrate is bound by residues T200 and 200 to 201 (TH).

The protein belongs to the alpha-carbonic anhydrase family. Zn(2+) is required as a cofactor.

It localises to the cytoplasm. The enzyme catalyses hydrogencarbonate + H(+) = CO2 + H2O. The catalysed reaction is urea = cyanamide + H2O. With respect to regulation, inhibited by acetazolamide. Functionally, catalyzes the reversible hydration of carbon dioxide. Can hydrate cyanamide to urea. This Ovis aries (Sheep) protein is Carbonic anhydrase 1 (CA1).